The chain runs to 321 residues: G-protein coupled receptor aex-2 (321 aa).

Residues M1–A24 lie on the Extracellular side of the membrane. N-linked (GlcNAc...) asparagine glycosylation is found at N2, N9, and N17. A helical transmembrane segment spans residues F25 to L45. Residues T46–R55 are Cytoplasmic-facing. A helical membrane pass occupies residues Q56–T76. Over R77–P90 the chain is Extracellular. C88 and C161 are disulfide-bonded. A helical membrane pass occupies residues Y91–V111. Over D112 to L132 the chain is Cytoplasmic. Residues L133–F153 form a helical membrane-spanning segment. Topologically, residues L154–P175 are extracellular. The chain crosses the membrane as a helical span at residues I176 to A196. At H197 to T221 the chain is on the cytoplasmic side. Residues L222–G242 traverse the membrane as a helical segment. Over E243–A254 the chain is Extracellular. The chain crosses the membrane as a helical span at residues T255 to W275. The Cytoplasmic segment spans residues T276–M321.

This sequence belongs to the G-protein coupled receptor 1 family. Expressed in the intestinal muscle, anal depressor, AVL and DVB GABAergic neurons, enteric muscles, the nerve ring, the ventral nerve cord and head mesodermal cells.

It is found in the cell membrane. It localises to the cell projection. The protein localises to the cilium. Its function is as follows. G-protein coupled receptor for the nlp-40 neuropeptide. The activity of this receptor is mediated by G proteins which activate adenylyl cyclase. Plays a role in the defecation motor program, which is a coordinated series of three muscle contractions that occurs every 45 seconds. Specifically, acts in GABAergic neurons, such as AVL and DVB, to control the expulsion step of defecation. Required for fatty acid uptake and metabolism by intestinal cells and therefore regulates the levels of triglycerides in the intestine. In Caenorhabditis elegans, this protein is G-protein coupled receptor aex-2.